Reading from the N-terminus, the 371-residue chain is DNA replication and repair protein RecF (371 aa).

30–37 (GQNGMGKT) is a binding site for ATP.

It belongs to the RecF family.

It is found in the cytoplasm. Its function is as follows. The RecF protein is involved in DNA metabolism; it is required for DNA replication and normal SOS inducibility. RecF binds preferentially to single-stranded, linear DNA. It also seems to bind ATP. In Phocaeicola vulgatus (strain ATCC 8482 / DSM 1447 / JCM 5826 / CCUG 4940 / NBRC 14291 / NCTC 11154) (Bacteroides vulgatus), this protein is DNA replication and repair protein RecF.